Reading from the N-terminus, the 2254-residue chain is Voltage-dependent T-type calcium channel subunit alpha-1G (2254 aa).

The disordered stretch occupies residues 1-48 (MDEEEDGAGAEESGQPRSFTQLNDLSGAGGRQGPGSTEKDPGSADSEA). Residues 1 to 80 (MDEEEDGAGA…RSWCLRTVCN (80 aa)) lie on the Cytoplasmic side of the membrane. Polar residues predominate over residues 15 to 24 (QPRSFTQLND). An I repeat occupies 68-398 (SRPRSWCLRT…LCLVVIATQF (331 aa)). Residues 81-101 (PWFERVSMLVILLNCVTLGMF) traverse the membrane as a helical segment. Topologically, residues 102–119 (RPCEDIACDSQRCRILQA) are extracellular. The helical transmembrane segment at 120–141 (FDDFIFAFFAVEMVVKMVALGI) threads the bilayer. Over 142–150 (FGKKCYLGD) the chain is Cytoplasmic. A helical transmembrane segment spans residues 151-170 (TWNRLDFFIVIAGMLEYSLD). Topologically, residues 171–175 (LQNVS) are extracellular. N173 is a glycosylation site (N-linked (GlcNAc...) asparagine). Residues 176-193 (FSAVRTVRVLRPLRAINR) form a helical membrane-spanning segment. The Cytoplasmic segment spans residues 194 to 213 (VPSMRILVTLLLDTLPMLGN). Residues 214-234 (VLLLCFFVFFIFGIVGVQLWA) form a helical membrane-spanning segment. At 235-370 (GLLRNRCFLP…YFVMDAHSFY (136 aa)) the chain is on the extracellular side. N246, N306, N310, and N322 each carry an N-linked (GlcNAc...) asparagine glycan. The helical transmembrane segment at 371 to 395 (NFIYFILLIIVGSFFMINLCLVVIA) threads the bilayer. At 396-744 (TQFSETKQRE…DTFRKIVDSK (349 aa)) the chain is on the cytoplasmic side. Phosphoserine is present on S467. Basic residues predominate over residues 494 to 506 (LVHHHHHHHHHYH). Disordered regions lie at residues 494–513 (LVHHHHHHHHHYHLGNGTLR), 525–553 (DANGSRRLMLPPPSTPTPSGGPPRGAESV), 579–598 (ASGRTVGSGKVYPTVHTSPP), and 699–721 (DAQHSDLRDPHSRRRQRSLGPDA). Over residues 534–545 (LPPPSTPTPSGG) the composition is skewed to pro residues. S716 carries the phosphoserine modification. An II repeat occupies 730–968 (WRLICDTFRK…LLVAILVEGF (239 aa)). The helical transmembrane segment at 745 to 765 (YFGRGIMIAILVNTLSMGIEY) threads the bilayer. Residues 766-778 (HEQPEELTNALEI) are Extracellular-facing. Residues 779-800 (SNIVFTSLFALEMLLKLLVYGP) traverse the membrane as a helical segment. At 801–806 (FGYIKN) the chain is on the cytoplasmic side. A helical transmembrane segment spans residues 807-825 (PYNIFDGVIVVISVWEIVG). Topologically, residues 826-833 (QQGGGLSV) are extracellular. The chain crosses the membrane as a helical span at residues 834 to 857 (LRTFRLMRVLKLVRFLPALQRQLV). Residues 858–868 (VLMKTMDNVAT) lie on the Cytoplasmic side of the membrane. Residues 869-889 (FCMLLMLFIFIFSILGMHLFG) form a helical membrane-spanning segment. The Extracellular segment spans residues 890–940 (CKFASERDGDTLPDRKNFDSLLWAIVTVFQILTQEDWNKVLYNGMASTSSW). Residues 941–965 (AALYFIALMTFGNYVLFNLLVAILV) traverse the membrane as a helical segment. Topologically, residues 966-1251 (EGFQAEGDAT…SRFRLLCHRI (286 aa)) are cytoplasmic. The tract at residues 1024–1209 (TPMSHPKSSS…GDDDNDEGNL (186 aa)) is disordered. 2 stretches are compositionally biased toward low complexity: residues 1041–1052 (GSGSRRTSSSGS) and 1065–1091 (PPSARSSPHSPWSAASSWTSRRSSRNS). 2 stretches are compositionally biased toward acidic residues: residues 1117-1126 (ESQDEEESSE) and 1196-1206 (PQLDGDDDNDE). Residues S1118, S1124, and S1125 each carry the phosphoserine modification. The stretch at 1242–1519 (SRFRLLCHRI…MFVGVVVENF (278 aa)) is one III repeat. Residues 1252 to 1274 (ITHKMFDHVVLVIIFLNCITIAM) form a helical membrane-spanning segment. The Extracellular segment spans residues 1275 to 1292 (ERPKIDPHSAERIFLTLS). Residues 1293–1313 (NYIFTAVFLAEMTVKVVALGW) traverse the membrane as a helical segment. Over 1314-1323 (CFGEQAYLRS) the chain is Cytoplasmic. A helical membrane pass occupies residues 1324 to 1343 (SWNVLDGLLVLISVIDILVS). Topologically, residues 1344-1357 (MVSDSGTKILGMLR) are extracellular. The helical transmembrane segment at 1358 to 1379 (VLRLLRTLRPLRVISRAQGLKL) threads the bilayer. Topologically, residues 1380–1389 (VVETLMSSLK) are cytoplasmic. Residues 1390–1413 (PIGNIVVICCAFFIIFGILGVQLF) form a helical membrane-spanning segment. The Extracellular segment spans residues 1414-1490 (KGKFFVCQGE…DQQPIMNHNP (77 aa)). 2 N-linked (GlcNAc...) asparagine glycosylation sites follow: N1427 and N1430. A helical membrane pass occupies residues 1491–1516 (WMLLYFISFLLIVAFFVLNMFVGVVV). The Cytoplasmic portion of the chain corresponds to 1517–1578 (ENFHKCRQHQ…RLLVHHLCTS (62 aa)). An IV repeat occupies 1564–1822 (DYSRFRLLVH…VVIAVLMKHL (259 aa)). A helical transmembrane segment spans residues 1579–1599 (HYLDLFITGVIGLNVVTMAME). Topologically, residues 1600–1613 (HYQQPQILDEALKI) are extracellular. The chain crosses the membrane as a helical span at residues 1614-1635 (CNYIFTVIFVFESVFKLVAFGF). The Cytoplasmic segment spans residues 1636 to 1642 (RRFFQDR). Residues 1643-1661 (WNQLDLAIVLLSIMGITLE) traverse the membrane as a helical segment. At 1662 to 1675 (EIEVNLSLPINPTI) the chain is on the extracellular side. Residue N1666 is glycosylated (N-linked (GlcNAc...) asparagine). Residues 1676 to 1699 (IRIMRVLRIARVLKLLKMAVGMRA) traverse the membrane as a helical segment. The Cytoplasmic segment spans residues 1700 to 1713 (LLHTVMQALPQVGN). A helical membrane pass occupies residues 1714-1734 (LGLLFMLLFFIFAALGVELFG). The Extracellular portion of the chain corresponds to 1735-1794 (DLECDETHPCEGLGRHATFRNFGMAFLTLFRVSTGDNWNGIMKDTLRDCDQESTCYNTVI). A helical transmembrane segment spans residues 1795 to 1822 (SPIYFVSFVLTAQFVLVNVVIAVLMKHL). Topologically, residues 1823-2254 (EESNKEAKEE…LSSDPTDMDP (432 aa)) are cytoplasmic. The tract at residues 2153 to 2254 (DSGSQPRLCP…LSSDPTDMDP (102 aa)) is disordered. Positions 2184-2193 (SPPSISIDPP) are enriched in low complexity. Composition is skewed to polar residues over residues 2220-2232 (PSVSSPLDSTAAS) and 2240-2254 (LSLSGLSSDPTDMDP).

Belongs to the calcium channel alpha-1 subunit (TC 1.A.1.11) family. CACNA1G subfamily. In response to raising of intracellular calcium, the T-type channels are activated by CaM-kinase II. In terms of tissue distribution, highly expressed in brain. Moderate expression in heart; low expression in placenta, kidney and lung.

It is found in the cell membrane. Its subcellular location is the cytoplasm. It catalyses the reaction Ca(2+)(in) = Ca(2+)(out). In terms of biological role, voltage-sensitive calcium channels (VSCC) mediate the entry of calcium ions into excitable cells and are also involved in a variety of calcium-dependent processes, including muscle contraction, hormone or neurotransmitter release, gene expression, cell motility, cell division and cell death. The isoform alpha-1G gives rise to T-type calcium currents. T-type calcium channels belong to the 'low-voltage activated (LVA)' group and are strongly blocked by nickel and mibefradil. A particularity of this type of channels is an opening at quite negative potentials and a voltage-dependent inactivation. T-type channels serve pacemaking functions in both central neurons and cardiac nodal cells and support calcium signaling in secretory cells and vascular smooth muscle. They may also be involved in the modulation of firing patterns of neurons which is important for information processing as well as in cell growth processes. In Rattus norvegicus (Rat), this protein is Voltage-dependent T-type calcium channel subunit alpha-1G (Cacna1g).